Reading from the N-terminus, the 761-residue chain is Proton-coupled zinc antiporter SLC30A5 (761 aa).

An N-acetylmethionine modification is found at Met-1. Over 1–29 (MEEKYGGDARPGPGGGLGPVDVPSARLTR) the chain is Cytoplasmic. The helical transmembrane segment at 30-46 (YILLLCLTKCLKAVGLF) threads the bilayer. The Lumenal segment spans residues 47-54 (ESYDLLKA). The chain crosses the membrane as a helical span at residues 55-75 (VHIVQFIFILKLGTAFFMVLF). Topologically, residues 76–96 (QKPFSSGKPITKHQWIKIFKH) are cytoplasmic. Residues 97-117 (AVAGCIISLLWFFGLTLCGPL) form a helical membrane-spanning segment. Arg-118 is a topological domain (lumenal). A helical transmembrane segment spans residues 119 to 139 (TLLLFEHSDIVVISLLSVLFT). The Cytoplasmic portion of the chain corresponds to 140 to 150 (SSGGGPAKTRG). The helical transmembrane segment at 151-171 (AAFFIIAVICLLLFDNDDLMA) threads the bilayer. The Lumenal portion of the chain corresponds to 172 to 191 (KMAEHPEGHHDSALTHMLYT). Residues 192 to 212 (AIAFLGVADHKGGVLLLVLAL) form a helical membrane-spanning segment. Residues 213 to 236 (CCKVGFHTASRKLSIDVGGAKRLQ) are Cytoplasmic-facing. The helical transmembrane segment at 237–257 (ALSQLVSVFLLCPWVIVLSVT) threads the bilayer. At 258–264 (TESKVES) the chain is on the lumenal side. A helical transmembrane segment spans residues 265-285 (WFSLIMPFTTVIFFVMILDFY). Topologically, residues 286–301 (MDSVCSVKMDVSKCAR) are cytoplasmic. A helical membrane pass occupies residues 302-322 (YGSFPIFISALLFGNFWTHPI). The Lumenal portion of the chain corresponds to 323–340 (TDQLRAMNRAAHQESTEH). The helical transmembrane segment at 341-361 (VLSGGVVVSAVFFILSANILS) threads the bilayer. The Cytoplasmic segment spans residues 362-416 (SPSKRGQKGTLIGYSPEGTPLYHFMGDAFQHSSQSVPRFIKDSLKQVLEESDSRQ). The chain crosses the membrane as a helical span at residues 417–437 (IFYFLCLNLLFTFVELFYGVL). Positions 418-636 (FYFLCLNLLF…VLIFLSVIPL (219 aa)) are mediates homodimerization with SLC30A6. Topologically, residues 438-446 (TNSLGLISD) are lumenal. Residues 447 to 467 (GFHMLFDCSALVMGLFAALMS) traverse the membrane as a helical segment. Zn(2+)-binding residues include His-449 and Asp-453. At 468-481 (RWKATRIFSYGYGR) the chain is on the cytoplasmic side. Residues 482 to 502 (IEILSGFINGLFLIVIAFFVF) traverse the membrane as a helical segment. Residues 503 to 518 (MESVARLIDPPELDTN) lie on the Lumenal side of the membrane. Residues 519 to 539 (MLTPVSVGGLIVNLIGICAFS) form a helical membrane-spanning segment. The tract at residues 540 to 574 (HAHSHGHGASQGNCHSDHGHSHHAHGHGHDHGHSH) is his-rich loop; required for zinc transport. Over 540–588 (HAHSHGHGASQGNCHSDHGHSHHAHGHGHDHGHSHGFTGGGMNANMRGV) the chain is Cytoplasmic. Residues 549–576 (SQGNCHSDHGHSHHAHGHGHDHGHSHGF) are disordered. A helical membrane pass occupies residues 589-609 (FLHVLADTLGSIGVIVSTVLI). 2 residues coordinate Zn(2+): His-591 and Asp-595. Over 610–613 (EQFG) the chain is Lumenal. A helical transmembrane segment spans residues 614 to 634 (WFIADPLCSLFIAVLIFLSVI). Topologically, residues 635–761 (PLIKDACQVL…KYCKDGTYIM (127 aa)) are cytoplasmic.

Belongs to the cation diffusion facilitator (CDF) transporter (TC 2.A.4) family. SLC30A subfamily. As to quaternary structure, heterodimer with SLC30A6/ZNT6; form a functional zinc ion transmembrane transporter. Post-translationally, could homodimerize through the formation of dityrosine bonds upon oxidative stress. As to expression, ubiquitously expressed.

The protein resides in the golgi apparatus. Its subcellular location is the golgi stack membrane. It is found in the cytoplasmic vesicle. It localises to the COPII-coated vesicle membrane. The protein localises to the secretory vesicle membrane. The protein resides in the trans-Golgi network membrane. It carries out the reaction Zn(2+)(in) + 2 H(+)(out) = Zn(2+)(out) + 2 H(+)(in). Together with SLC30A6 forms a functional proton-coupled zinc ion antiporter mediating zinc entry into the lumen of organelles along the secretory pathway. By contributing to zinc ion homeostasis within the early secretory pathway, regulates the activation and folding of enzymes like alkaline phosphatases and enzymes involved in phosphatidylinositol glycan anchor biosynthesis. Through the transport of zinc into secretory granules of pancreatic beta-cells, plays an important role in the storage and secretion of insulin. The polypeptide is Proton-coupled zinc antiporter SLC30A5 (Mus musculus (Mouse)).